The chain runs to 50 residues: MDDFAEFFPTLVLDEPEVARRPARDAEVLAILADAERPGGSNCTAWCVVA.

C47 carries the cysteine methyl ester modification. C47 is lipidated: S-farnesyl cysteine. Residues 48–50 (VVA) constitute a propeptide, removed in mature form.

The protein localises to the cell membrane. Activates B-regulated development. This Schizophyllum commune (Split gill fungus) protein is Mating-type pheromone BAP1(3) (BAP1(3)).